We begin with the raw amino-acid sequence, 421 residues long: Phosphatidylinositol 5-phosphate 4-kinase type-2 gamma (421 aa).

Ala-2 is subject to N-acetylalanine. A Phosphoserine modification is found at Ser-26. In terms of domain architecture, PIPK spans 43–420; the sequence is AADPLVGVFL…RFLDFIANIF (378 aa). The required for interaction with PIP5K1A stretch occupies residues 69-75; the sequence is VMLLPDD. Ser-349 carries the post-translational modification Phosphoserine.

As to quaternary structure, interacts with PIP5K1A; the interaction inhibits PIP5K1A kinase activity. Post-translationally, phosphorylated, phosphorylation is induced by EGF.

The protein resides in the endoplasmic reticulum. It localises to the cytoplasm. The enzyme catalyses a 1,2-diacyl-sn-glycero-3-phospho-(1D-myo-inositol-5-phosphate) + ATP = a 1,2-diacyl-sn-glycero-3-phospho-(1D-myo-inositol-4,5-bisphosphate) + ADP + H(+). It catalyses the reaction 1,2-dihexadecanoyl-sn-glycero-3-phospho-(1D-myo-inositol-5-phosphate) + ATP = 1,2-dihexadecanoyl-sn-glycero-3-phospho-(1D-myo-inositol-4,5-bisphosphate) + ADP + H(+). The catalysed reaction is 1,2-dihexadecanoyl-sn-glycero-3-phospho-(1D-myo-inositol-5-phosphate) + GTP = 1,2-dihexadecanoyl-sn-glycero-3-phospho-(1D-myo-inositol-4,5-bisphosphate) + GDP + H(+). Functionally, phosphatidylinositol 5-phosphate 4-kinase with low enzymatic activity. May be a GTP sensor, has higher GTP-dependent kinase activity than ATP-dependent kinase activity. PIP4Ks negatively regulate insulin signaling through a catalytic-independent mechanism. They interact with PIP5Ks and suppress PIP5K-mediated PtdIns(4,5)P2 synthesis and insulin-dependent conversion to PtdIns(3,4,5)P3. The sequence is that of Phosphatidylinositol 5-phosphate 4-kinase type-2 gamma from Mus musculus (Mouse).